Reading from the N-terminus, the 156-residue chain is Cell division protein SepF (156 aa).

The span at alanine 20–aspartate 36 shows a compositional bias: basic and acidic residues. The interval alanine 20–proline 50 is disordered.

It belongs to the SepF family. In terms of assembly, homodimer. Interacts with FtsZ.

Its subcellular location is the cytoplasm. Its function is as follows. Cell division protein that is part of the divisome complex and is recruited early to the Z-ring. Probably stimulates Z-ring formation, perhaps through the cross-linking of FtsZ protofilaments. Its function overlaps with FtsA. The chain is Cell division protein SepF from Bacillus cereus (strain G9842).